Reading from the N-terminus, the 354-residue chain is Ribosomal RNA large subunit methyltransferase M (354 aa).

Residues Ser183, 216 to 219 (SPGG), Asp235, Asp255, and Asp271 each bind S-adenosyl-L-methionine. The active-site Proton acceptor is Lys300.

It belongs to the class I-like SAM-binding methyltransferase superfamily. RNA methyltransferase RlmE family. RlmM subfamily. In terms of assembly, monomer.

It is found in the cytoplasm. It carries out the reaction cytidine(2498) in 23S rRNA + S-adenosyl-L-methionine = 2'-O-methylcytidine(2498) in 23S rRNA + S-adenosyl-L-homocysteine + H(+). Its function is as follows. Catalyzes the 2'-O-methylation at nucleotide C2498 in 23S rRNA. The chain is Ribosomal RNA large subunit methyltransferase M from Pseudomonas putida (strain ATCC 700007 / DSM 6899 / JCM 31910 / BCRC 17059 / LMG 24140 / F1).